A 627-amino-acid polypeptide reads, in one-letter code: Capsid vertex component 2 (627 aa).

An interaction with major capsid protein/MCP region spans residues 1-56; that stretch reads MFGRGLPPLKFGQIGGDGWSTVLADPGNRLIVANAHRSEPRLRVETLIREELLTSR. A disordered region spans residues 458–480; that stretch reads LSGDGDPIRAPGSRPPAAAEATL.

It belongs to the herpesviridae CVC2 protein family. As to quaternary structure, heterodimerizes with CVC1. Interacts with major capsid protein/MCP and triplex capsid protein 1/TRX1 at the pentamer vertices. Interacts with the large tegument protein/LTP.

The protein resides in the virion. Its subcellular location is the host nucleus. In terms of biological role, capsid vertex-specific component that plays a role during viral DNA encapsidation, assuring correct genome cleavage and presumably stabilizing capsids that contain full-length viral genomes. Participates in the interaction between the capsid and the tegument through interaction with the large tegument protein/LTP. In Psittacid herpesvirus 1 (isolate Amazon parrot/-/97-0001/1997) (PsHV-1), this protein is Capsid vertex component 2.